The chain runs to 502 residues: Probable cytosol aminopeptidase (502 aa).

Mn(2+) is bound by residues K267 and D272. K279 is a catalytic residue. D290, D349, and E351 together coordinate Mn(2+). The active site involves R353.

This sequence belongs to the peptidase M17 family. Mn(2+) serves as cofactor.

The protein localises to the cytoplasm. The catalysed reaction is Release of an N-terminal amino acid, Xaa-|-Yaa-, in which Xaa is preferably Leu, but may be other amino acids including Pro although not Arg or Lys, and Yaa may be Pro. Amino acid amides and methyl esters are also readily hydrolyzed, but rates on arylamides are exceedingly low.. It catalyses the reaction Release of an N-terminal amino acid, preferentially leucine, but not glutamic or aspartic acids.. Functionally, presumably involved in the processing and regular turnover of intracellular proteins. Catalyzes the removal of unsubstituted N-terminal amino acids from various peptides. This Aeromonas hydrophila subsp. hydrophila (strain ATCC 7966 / DSM 30187 / BCRC 13018 / CCUG 14551 / JCM 1027 / KCTC 2358 / NCIMB 9240 / NCTC 8049) protein is Probable cytosol aminopeptidase.